The sequence spans 720 residues: Catalase-peroxidase (720 aa).

Positions 1 to 21 (MSENKCPVMHGSATTTENSMA) are cleaved as a signal peptide. A cross-link (tryptophyl-tyrosyl-methioninium (Trp-Tyr) (with M-248)) is located at residues 94 to 222 (WHAAGTYRIA…LAAVMMGLIY (129 aa)). His-95 serves as the catalytic Proton acceptor. Residues 222–248 (YVNPEGVDGKPDPLKTAQDIRETFARM) constitute a cross-link (tryptophyl-tyrosyl-methioninium (Tyr-Met) (with W-94)). His-263 contributes to the heme b binding site.

Belongs to the peroxidase family. Peroxidase/catalase subfamily. Homodimer or homotetramer. It depends on heme b as a cofactor. In terms of processing, formation of the three residue Trp-Tyr-Met cross-link is important for the catalase, but not the peroxidase activity of the enzyme.

It carries out the reaction H2O2 + AH2 = A + 2 H2O. The catalysed reaction is 2 H2O2 = O2 + 2 H2O. In terms of biological role, bifunctional enzyme with both catalase and broad-spectrum peroxidase activity. In Shewanella denitrificans (strain OS217 / ATCC BAA-1090 / DSM 15013), this protein is Catalase-peroxidase.